Reading from the N-terminus, the 118-residue chain is Large ribosomal subunit protein bL20 (118 aa).

This sequence belongs to the bacterial ribosomal protein bL20 family.

Functionally, binds directly to 23S ribosomal RNA and is necessary for the in vitro assembly process of the 50S ribosomal subunit. It is not involved in the protein synthesizing functions of that subunit. The chain is Large ribosomal subunit protein bL20 (rplT) from Thermotoga maritima (strain ATCC 43589 / DSM 3109 / JCM 10099 / NBRC 100826 / MSB8).